The primary structure comprises 1064 residues: Ribosome quality control complex subunit NEMF (1064 aa).

A Phosphothreonine modification is found at T7. Positions 296-359 form a coiled coil; the sequence is VDEFYSKIEG…LIEMNLQIVD (64 aa). The residue at position 417 (S417) is a Phosphoserine. The segment at 420 to 451 is disordered; that stretch reads EDGDGDASIENSDAEAPKGKKKKQKNKQLQKP. Basic residues predominate over residues 438–447; sequence GKKKKQKNKQ. The stretch at 481–512 forms a coiled coil; sequence AAKKTQRTVEAAEKAFKSAEKKTKQTLKEVQT. The span at 694–707 shows a compositional bias: acidic residues; that stretch reads EQLEGGDSSEEETE. Disordered stretches follow at residues 694-718 and 731-973; these read EQLE…DVEL and SGRD…SLTG. Residues 731-756 are compositionally biased toward basic and acidic residues; the sequence is SGRDELSSEDGEAKAVTKDQEPIGEM. At S737 the chain carries Phosphoserine. A compositionally biased stretch (polar residues) spans 771–781; the sequence is IDLSHLQSQRP. Residues 828 to 839 show a composition bias toward basic and acidic residues; the sequence is IEEKDKERESAV. The stretch at 858-882 forms a coiled coil; the sequence is KRGQKSKMKKMKEKYKDQDDEDREL. The segment covering 859 to 870 has biased composition (basic residues); it reads RGQKSKMKKMKE. Positions 947–959 are enriched in basic and acidic residues; it reads DDPHDDKEEHDLD. Positions 960–973 are enriched in polar residues; that stretch reads QQGNEENLFDSLTG.

Belongs to the NEMF family. In terms of assembly, component of the ribosome quality control complex (RQC), composed of the E3 ubiquitin ligase LTN1, TCF25 and NEMF associated with the 60S ribosomal subunit. The complex probably also contains VCP/p97 and its ubiquitin-binding cofactors. Interacts (via its N-terminus) with XPO1.

The protein resides in the cytoplasm. The protein localises to the cytosol. It localises to the nucleus. Its function is as follows. Key component of the ribosome quality control complex (RQC), a ribosome-associated complex that mediates the extraction of incompletely synthesized nascent chains from stalled ribosomes as well as their ubiquitin-mediated proteasomal degradation. Thereby, frees 60S subunit ribosomes from the stalled translation complex and prevents the accumulation of nascent polypeptide chains that are potentially toxic for the cell. Within the RQC complex, NEMF specifically binds stalled 60S ribosomal subunits by recognizing an exposed, nascent chain-conjugated tRNA moiety and promotes the recruitment of LTN1 to stalled 60S subunits. Following binding to stalled 60S ribosomal subunits, NEMF mediates CAT tailing by recruiting alanine-charged tRNA to the A-site and directing the elongation of stalled nascent chains independently of mRNA or 40S subunits, leading to non-templated C-terminal alanine extensions (CAT tails). Mainly recruits alanine-charged tRNAs, but can also other amino acid-charged tRNAs. CAT tailing is required to promote ubiquitination of stalled nascent chains by different E3 ubiquitin-protein ligases. In the canonical RQC pathway (RQC-L), CAT tailing facilitates LTN1-dependent ubiquitination by exposing lysine residues that would otherwise remain buried in the ribosomal exit tunnel. In the alternative RQC pathway (RQC-C) CAT tailing creates an C-degron mainly composed of alanine that is recognized by the CRL2(KLHDC10) and RCHY1/PIRH2 E3 ligases, leading to ubiquitination and degradation of stalled nascent chains. NEMF may also indirectly play a role in nuclear export. The protein is Ribosome quality control complex subunit NEMF of Mus musculus (Mouse).